The sequence spans 29 residues: MKNRVYESLTTVFSVLVVSSFLYIWFATY.

Residues 5–27 (VYESLTTVFSVLVVSSFLYIWFA) traverse the membrane as a helical segment.

The protein localises to the cell inner membrane. Functionally, may bind to BasS and modulate its sensor kinase activity. The sequence is that of Putative membrane protein PmrR (pmrR) from Escherichia coli (strain K12).